We begin with the raw amino-acid sequence, 421 residues long: Serine hydroxymethyltransferase (421 aa).

Residues leucine 121 and 125–127 (GHL) each bind (6S)-5,6,7,8-tetrahydrofolate. Residue lysine 229 is modified to N6-(pyridoxal phosphate)lysine.

The protein belongs to the SHMT family. Homodimer. It depends on pyridoxal 5'-phosphate as a cofactor.

It localises to the cytoplasm. It carries out the reaction (6R)-5,10-methylene-5,6,7,8-tetrahydrofolate + glycine + H2O = (6S)-5,6,7,8-tetrahydrofolate + L-serine. Its pathway is one-carbon metabolism; tetrahydrofolate interconversion. The protein operates within amino-acid biosynthesis; glycine biosynthesis; glycine from L-serine: step 1/1. Functionally, catalyzes the reversible interconversion of serine and glycine with tetrahydrofolate (THF) serving as the one-carbon carrier. This reaction serves as the major source of one-carbon groups required for the biosynthesis of purines, thymidylate, methionine, and other important biomolecules. Also exhibits THF-independent aldolase activity toward beta-hydroxyamino acids, producing glycine and aldehydes, via a retro-aldol mechanism. The protein is Serine hydroxymethyltransferase of Actinobacillus pleuropneumoniae serotype 5b (strain L20).